We begin with the raw amino-acid sequence, 362 residues long: Protein indeterminate-domain 16 (362 aa).

Positions 1 to 22 (MELTQPIRENGDPQGHQLTDPD) are disordered. C2H2-type zinc fingers lie at residues 39–61 (YVCE…RRRH) and 82–112 (YVCP…RRKH). The CCHC-type 1; atypical zinc finger occupies 118 to 142 (WVCERCSKGYAVQSDYKAHLKTCGS). Positions 120, 123, 136, 140, 147, 149, 162, and 166 each coordinate Zn(2+). The CCHC-type 2; atypical zinc-finger motif lies at 145-168 (HSCDCGRVFSRVESFIEHQDTCTI). The segment at 155–167 (RVESFIEHQDTCT) is SHR-binding. The tract at residues 247-278 (SAQARHNEKRETSLTKERANEEARKAEETRQE) is disordered. Positions 251–278 (RHNEKRETSLTKERANEEARKAEETRQE) are enriched in basic and acidic residues. Positions 252-319 (HNEKRETSLT…VREEAIKRIN (68 aa)) form a coiled coil.

As to expression, highly expressed in leaves, hypocotyls, roots, vasculature of cotyledons, floral organs and in the endodermis and vasculaturenof inflorescence stems.

The protein resides in the nucleus. In terms of biological role, transcription factor regulating lateral organ morphogenesis and gravitropic responses. Has a redundant role with IDD14 in directing leaf and floral organ morphogenesis. Acts cooperatively with IDD15 to control silique and branche orientation. Involved in the establishment of auxin gradients through the regulation of auxin biosynthesis and transport. The protein is Protein indeterminate-domain 16 of Arabidopsis thaliana (Mouse-ear cress).